Here is a 398-residue protein sequence, read N- to C-terminus: Fructose-bisphosphate aldolase 2, chloroplastic (398 aa).

Residues 1 to 46 (MASTSLLKASPVLDKSEWVKGQSVLFRQPSSASVVLRNRATSLTVR) constitute a chloroplast transit peptide. Arginine 95 provides a ligand contact to substrate. Serine 157 carries the post-translational modification Phosphoserine. Substrate is bound at residue lysine 185. Serine 215 is subject to Phosphoserine. The active-site Proton acceptor is glutamate 225. Lysine 267 acts as the Schiff-base intermediate with dihydroxyacetone-P in catalysis. Substrate is bound at residue 309-311 (SGG). Position 394 is an N6,N6,N6-trimethyllysine (lysine 394).

The protein belongs to the class I fructose-bisphosphate aldolase family. In terms of assembly, homotetramer. In terms of processing, can be trimethylated at Lys-394 by LSMT-L. The methylation level has no influence on the ologomerization state or on the kinetic properties of the enzyme. Phosphorylated on tyrosine residues in response to abscisic acid (ABA) in germinating seeds. As to expression, highly expressed in rosettes leaves.

It localises to the plastid. It is found in the chloroplast. The protein resides in the plastoglobule. The protein localises to the chloroplast stroma. It carries out the reaction beta-D-fructose 1,6-bisphosphate = D-glyceraldehyde 3-phosphate + dihydroxyacetone phosphate. The protein operates within carbohydrate degradation; glycolysis; D-glyceraldehyde 3-phosphate and glycerone phosphate from D-glucose: step 4/4. Plays a key role in glycolysis and gluconeogenesis. The chain is Fructose-bisphosphate aldolase 2, chloroplastic from Arabidopsis thaliana (Mouse-ear cress).